Here is a 286-residue protein sequence, read N- to C-terminus: 2-hydroxy-6-oxo-6-phenylhexa-2,4-dienoate hydrolase (286 aa).

Residues Gly-42–Gly-43, Asn-51, Asn-111, Thr-180, and Arg-190 contribute to the substrate site. The active-site Proton acceptor is the His-265. Substrate is bound at residue Trp-266.

It belongs to the AB hydrolase superfamily. BphD family. Homodimer.

The catalysed reaction is 2,6-dioxo-6-phenylhexa-3-enoate + H2O = 2-oxopent-4-enoate + benzoate + H(+). It participates in xenobiotic degradation; biphenyl degradation; 2-hydroxy-2,4-pentadienoate and benzoate from biphenyl: step 4/4. Catalyzes an unusual C-C bond hydrolysis of 2-hydroxy-6-oxo-6-phenylhexa-2,4-dienoic acid (HOPDA) to produce benzoic acid and 2-hydroxy-2,4-pentadienoic acid (HPD). The polypeptide is 2-hydroxy-6-oxo-6-phenylhexa-2,4-dienoate hydrolase (Comamonas testosteroni (Pseudomonas testosteroni)).